A 320-amino-acid polypeptide reads, in one-letter code: Cytochrome f (320 aa).

A signal peptide spans 1–35; it reads MQTRNAFSYIKEEITRSISVLLVIYIIIRAPISNA. The heme site is built by Y36, C56, C59, and H60. The helical transmembrane segment at 286–305 threads the bilayer; that stretch reads VQGLLFFLASIIFAQIFLVL.

It belongs to the cytochrome f family. In terms of assembly, the 4 large subunits of the cytochrome b6-f complex are cytochrome b6, subunit IV (17 kDa polypeptide, petD), cytochrome f and the Rieske protein, while the 4 small subunits are PetG, PetL, PetM and PetN. The complex functions as a dimer. It depends on heme as a cofactor.

It localises to the plastid. It is found in the chloroplast thylakoid membrane. Functionally, component of the cytochrome b6-f complex, which mediates electron transfer between photosystem II (PSII) and photosystem I (PSI), cyclic electron flow around PSI, and state transitions. This chain is Cytochrome f, found in Lotus japonicus (Lotus corniculatus var. japonicus).